The chain runs to 233 residues: MITTRTARQCGQADYGWLQARYTFSFGHYFDPKLLGYASLRVLNQEVLAPGAAFQPRTYPKVDILNVILDGEAEYRDSEGNHVQASAGEALLLSTQPGVSYSEHNLSKDKPLTRMQLWLDACPQRENPLIQKLALNMGKQQLIASPEGAMGSLQLRQQVWLHHIVLDKGESANFQLHGPRAYLQSIHGKFHALTHHEEKAALTCGDGAFIRDEANITLVADSPLRALLIDLPV.

Belongs to the pirin family. Monomer.

It localises to the cytoplasm. Functionally, does not have quercetin 2,3-dioxygenase activity. This chain is Pirin-like protein YhaK (yhaK), found in Escherichia coli (strain K12).